Consider the following 463-residue polypeptide: UDP-N-acetylmuramate--L-alanine ligase (463 aa).

112 to 118 (GTHGKTT) is a binding site for ATP.

Belongs to the MurCDEF family.

It localises to the cytoplasm. The enzyme catalyses UDP-N-acetyl-alpha-D-muramate + L-alanine + ATP = UDP-N-acetyl-alpha-D-muramoyl-L-alanine + ADP + phosphate + H(+). Its pathway is cell wall biogenesis; peptidoglycan biosynthesis. Cell wall formation. This chain is UDP-N-acetylmuramate--L-alanine ligase, found in Dechloromonas aromatica (strain RCB).